Consider the following 623-residue polypeptide: MSHIMVNVAWPYANGPRHIGHVAGFGVPSDVYARYQRMKGNDVLMVSGTDEHGTPILVEADKEGVTPQELANRYNRVIANDLCNLGLSYDLFTRTTTKNHEHVVQEMFRQCLANGYIYKGTQKVAISPSTGRTLPDRYIEGECPICHAQGARGDQCDNCGNELDPDELINPVSKINGETPIFEETEHYFLDLPALAEANLAWLKTRKGWRPNVLNFSIGLFKEVKPRAITRDIDWGIPVPVPGWIDNPNKRLYVWFDAVIGYLSASIEWARRSGDPEAWRAWWNDPATPGYYFMGKDNITFHSQIWPSEMLAYNGEGSKGGEPGELGRLDLPEQVVASEFMTMEGKKFSSSRGIVIYVKDILSRYPVDAVRYYISAAGPESSDSDFTWAEFVRQNNEVLAASWGNLVNRVANLIAKNFGQIPPIVEEKMTDEDRALLAQSSAAFDTVGALIEQHRQKSALNDAMSLVGDINKYISATEPWKIKDDPERLGTVLHVAAQAVSDANHLLAPFLPHSSQKVWEALGGEGTFSPLPHIEEVNDLDDPEFTYPVITGKYVLGENVHPWKSEPIVVGAPVVKPTPIFAKIPPEAVDEELARFDADLKARREAEQARLDAEKAKLAAGEE.

Positions 11–21 (PYANGPRHIGH) match the 'HIGH' region motif. Residues C143, C146, C156, and C159 each coordinate Zn(2+). Residues 347–351 (KFSSS) carry the 'KMSKS' region motif. ATP is bound at residue S350.

It belongs to the class-I aminoacyl-tRNA synthetase family. MetG type 1 subfamily. As to quaternary structure, monomer. The cofactor is Zn(2+).

Its subcellular location is the cytoplasm. The enzyme catalyses tRNA(Met) + L-methionine + ATP = L-methionyl-tRNA(Met) + AMP + diphosphate. In terms of biological role, is required not only for elongation of protein synthesis but also for the initiation of all mRNA translation through initiator tRNA(fMet) aminoacylation. This is Methionine--tRNA ligase from Bifidobacterium animalis subsp. lactis (strain AD011).